A 142-amino-acid polypeptide reads, in one-letter code: MKTFTATPETVTRDWFVVDADGKTLGRIATEIALRLRGKHKPEYTPHVDTGDYIIVINAEKVTVTGNKAQGKTYYSHSGFPGGIKQISFEKLQAHKPEMIIEKAVKGMLPKGPLGRAMFRKLKVYAGAEHNHAAQQPQVLDI.

Belongs to the universal ribosomal protein uL13 family. As to quaternary structure, part of the 50S ribosomal subunit.

Functionally, this protein is one of the early assembly proteins of the 50S ribosomal subunit, although it is not seen to bind rRNA by itself. It is important during the early stages of 50S assembly. The sequence is that of Large ribosomal subunit protein uL13 from Shewanella oneidensis (strain ATCC 700550 / JCM 31522 / CIP 106686 / LMG 19005 / NCIMB 14063 / MR-1).